Reading from the N-terminus, the 353-residue chain is Putative ABC transporter ATP-binding protein MG303 homolog (353 aa).

Positions 72-312 (LYFYNLSVFV…MQLLQRYEIT (241 aa)) constitute an ABC transporter domain. Residue 107–114 (GPSGSGKT) coordinates ATP.

Belongs to the ABC transporter superfamily.

This is Putative ABC transporter ATP-binding protein MG303 homolog from Mycoplasma pneumoniae (strain ATCC 29342 / M129 / Subtype 1) (Mycoplasmoides pneumoniae).